Here is a 469-residue protein sequence, read N- to C-terminus: Glutamate--tRNA ligase 2 (469 aa).

Residues 10 to 20 (PSPTGYLHIGG) carry the 'HIGH' region motif. The Zn(2+) site is built by Cys-99, Cys-101, Cys-126, and Asp-128. The short motif at 237 to 241 (RLSKR) is the 'KMSKS' region element. An ATP-binding site is contributed by Lys-240.

This sequence belongs to the class-I aminoacyl-tRNA synthetase family. Glutamate--tRNA ligase type 1 subfamily. Monomer. Zn(2+) is required as a cofactor.

The protein localises to the cytoplasm. It catalyses the reaction tRNA(Glu) + L-glutamate + ATP = L-glutamyl-tRNA(Glu) + AMP + diphosphate. Its function is as follows. Catalyzes the attachment of glutamate to tRNA(Glu) in a two-step reaction: glutamate is first activated by ATP to form Glu-AMP and then transferred to the acceptor end of tRNA(Glu). The chain is Glutamate--tRNA ligase 2 from Coxiella burnetii (strain CbuG_Q212) (Coxiella burnetii (strain Q212)).